The following is a 389-amino-acid chain: MADNTDNRRSLWGVPEKLQLHIAMLTLQFGYAGFHVVSRAALNMGISKLVFPVYRNIIALLLLLPFAYFLEKKERPAITLNFLIQFFFLALIGITANQGFYLLGLDNTSPTFASSMQNSVPAITFLMAALLRIEKVRINRRDGISKILGTALCVAGASVITLYKGPTIYTPASHLHAHLLTTNSAVLAPLGNAAPKNWTLGCIYLIGHCLSWSGWLVFQAPVLKSYPARLSVTSYTCFFGIIQFLIIAAFCERDSQAWVFHSGWELFTILYAGIVASGIAFAVQIWCIDRGGPVFVAVYQPVQTLVVAIMASIALGEEFYLGGIIGAVLIIAGLYFVLYGKSEERKFAALEKAAIQSSAEHGIERAPVSRNSIKSSITTPLLHQSTDNV.

The next 10 membrane-spanning stretches (helical) occupy residues L18–S38, L49–F69, P76–A96, T111–L131, G143–Y163, W198–F218, L230–F250, L266–W286, V294–A314, and F319–Y339. EamA domains follow at residues A32–T161 and L210–Y339. Position 372 is a phosphoserine (S372).

This sequence belongs to the drug/metabolite transporter (DMT) superfamily. Plant drug/metabolite exporter (P-DME) (TC 2.A.7.4) family. As to expression, mostly expressed in stems and hypocotyls, also present in seedlings, root, leaves, flowers and siliques. Ubiquitous, mostly expressed in vascular tissues and secondary wall-forming cells, including developing xylem vessels and fibers.

Its subcellular location is the vacuole membrane. Required for secondary wall formation in fibers, especially in short days conditions. Promotes indole metabolism and transport (e.g. tryptophan, neoglucobrassicin and auxin (indole-3-acetic acid)). May prevent salicylic-acid (SA) accumulation. This is Protein WALLS ARE THIN 1 (WAT1) from Arabidopsis thaliana (Mouse-ear cress).